Consider the following 104-residue polypeptide: Flagellar hook-basal body complex protein FliE (104 aa).

It belongs to the FliE family.

It is found in the bacterial flagellum basal body. The polypeptide is Flagellar hook-basal body complex protein FliE (Salmonella typhi).